Here is a 199-residue protein sequence, read N- to C-terminus: Guanylyl cyclase-activating protein 1 (199 aa).

Gly-2 is lipidated: N-myristoyl glycine. Asn-3 carries the deamidated asparagine modification. 4 consecutive EF-hand domains span residues 13–48 (SATE…KNLS), 50–85 (SANK…VLKG), 86–121 (KVDQ…IRAI), and 129–164 (TAEE…DEVL). The Ca(2+) site is built by Asp-63, Asn-65, Asp-67, Tyr-69, Glu-74, Asp-99, Asp-101, Asn-103, Cys-105, Glu-110, Asp-142, Asn-144, Asp-146, Glu-148, and Glu-153.

In terms of tissue distribution, retina, in rod and cone outer segments, and pineal gland.

In terms of biological role, stimulates retinal guanylyl cyclase when free calcium ions concentration is low and inhibits guanylyl cyclase when free calcium ions concentration is elevated. This Ca(2+)-sensitive regulation of retinal guanylyl cyclase is a key event in recovery of the dark state of rod photoreceptors following light exposure. In Gallus gallus (Chicken), this protein is Guanylyl cyclase-activating protein 1 (GUCA1A).